Here is a 400-residue protein sequence, read N- to C-terminus: Jasmonate-induced oxygenase 1 (400 aa).

A Fe2OG dioxygenase domain is found at 248 to 349 (DVGACLRVNY…RVSLAFFYNP (102 aa)). Jasmonate is bound at residue Arg254. The 2-oxoglutarate site is built by Asn256 and Tyr258. Residues His273, Asp275, and His330 each coordinate Fe cation. 2-oxoglutarate is bound by residues Arg340 and Ser342. Residues Arg379 and Arg383 each coordinate jasmonate.

This sequence belongs to the iron/ascorbate-dependent oxidoreductase family. The cofactor is L-ascorbate. Fe(2+) serves as cofactor.

The catalysed reaction is jasmonate + 2-oxoglutarate + O2 = (1R,2R)-12-hydroxyjasmonate + succinate + CO2. Its function is as follows. 2-oxoglutarate-dependent dioxygenase involved in the oxidation of jasmonate (JA), a stress-induced phytohormone synthesized in response to attack by pathogens and herbivores, which triggers the activation of defense responses via the JA-mediated signaling pathway. Converts JA to 12-hydroxyjasmonate (12OH-JA), an inactive form of JA. Prevents over-accumulation of JA and indirectly its bioactive form JA-Ile under stress response. Acts as a negative regulator of JA-mediated defense signaling, by contributing to 12OH-JA accumulation, which represses JA defense responses upon infection by the fungal pathogen Botrytis cinerea and the herbivorous caterpillar Mamestra brassicae. In Arabidopsis thaliana (Mouse-ear cress), this protein is Jasmonate-induced oxygenase 1.